The sequence spans 664 residues: Macoilin (664 aa).

A run of 4 helical transmembrane segments spans residues 28–48 (TFLY…DFVL), 75–95 (AFSV…LLFI), 120–140 (VCLP…AIRF), and 154–174 (FAAH…KSYV). The segment covering 253-265 (REKGKEKDKDAKK) has biased composition (basic and acidic residues). A disordered region spans residues 253–274 (REKGKEKDKDAKKHNLGINNNN). The residue at position 305 (serine 305) is a Phosphoserine. The segment covering 320 to 348 (KNYKNASGVVNSSPRSHSATNGSIPSSSS) has biased composition (polar residues). The interval 320–375 (KNYKNASGVVNSSPRSHSATNGSIPSSSSKNEKKQKCTSKSPSTHKDLMENCIPNN) is disordered. N-linked (GlcNAc...) asparagine glycosylation occurs at asparagine 324. Position 332 is a phosphoserine (serine 332). Residues asparagine 340 and asparagine 452 are each glycosylated (N-linked (GlcNAc...) asparagine). Residues 630-664 (TSPLSPVSPHYSSKFVETSPSGLDPNASVYQPLKK) form a disordered region. A phosphoserine mark is found at serine 631 and serine 634. A glycan (N-linked (GlcNAc...) asparagine) is linked at asparagine 655.

The protein belongs to the macoilin family.

The protein resides in the rough endoplasmic reticulum membrane. It localises to the nucleus membrane. Functionally, plays a role in the regulation of neuronal activity. The polypeptide is Macoilin (MACO1) (Macaca mulatta (Rhesus macaque)).